The following is a 681-amino-acid chain: Methionine--tRNA ligase (681 aa).

The 'HIGH' region signature appears at 18 to 28; sequence PYANGSIHLGH. Zn(2+) is bound by residues Cys-149, Cys-152, Cys-162, and Cys-165. The 'KMSKS' region signature appears at 334–338; that stretch reads KMSKS. Lys-337 is an ATP binding site. One can recognise a tRNA-binding domain in the interval 580–681; it reads DFAKLDLRIV…NGAEPGQRVS (102 aa).

Belongs to the class-I aminoacyl-tRNA synthetase family. MetG type 1 subfamily. Homodimer. Requires Zn(2+) as cofactor.

It localises to the cytoplasm. It catalyses the reaction tRNA(Met) + L-methionine + ATP = L-methionyl-tRNA(Met) + AMP + diphosphate. Functionally, is required not only for elongation of protein synthesis but also for the initiation of all mRNA translation through initiator tRNA(fMet) aminoacylation. The chain is Methionine--tRNA ligase from Chromohalobacter salexigens (strain ATCC BAA-138 / DSM 3043 / CIP 106854 / NCIMB 13768 / 1H11).